A 1806-amino-acid chain; its full sequence is uncharacterized protein (1806 aa).

Disordered stretches follow at residues 38-131 (EASG…SPLF) and 158-282 (KAVS…KPRP). Low complexity predominate over residues 51–70 (KSPLRSPARLLPLPRLAPKP). Phosphoserine occurs at positions 52, 56, 79, 87, 88, 92, and 128. Low complexity predominate over residues 82–100 (PSLRPSSTGPSPSGGLSEE). Residues 226-236 (DTARPLVEPRP) are compositionally biased toward basic and acidic residues. 2 positions are modified to phosphoserine: S244 and S284. Disordered stretches follow at residues 299 to 320 (RKVA…ERPR), 355 to 431 (KEKM…GGEW), 456 to 604 (SESP…PEDD), and 627 to 696 (QSGR…ELRP). Residue S366 is modified to Phosphoserine. At T378 the chain carries Phosphothreonine. S384 is subject to Phosphoserine. Residues 386–400 (WEEKAKLDPEPEKAA) show a composition bias toward basic and acidic residues. S404 is modified (phosphoserine). Positions 412–422 (ELAEVKSRVAD) are enriched in basic and acidic residues. Residues 456–470 (SESPLATPASPSAAP) show a composition bias toward low complexity. Residues S458 and S508 each carry the phosphoserine modification. Over residues 514–523 (LFSSSASSNE) the composition is skewed to polar residues. Composition is skewed to basic and acidic residues over residues 524-549 (VKYE…EGHS) and 564-573 (TLRDKSRQTE). A Phosphothreonine modification is found at T600. 2 stretches are compositionally biased toward basic and acidic residues: residues 641–652 (AHARVSEPRPRP) and 661–674 (DPPD…ENSR). S749 carries the phosphoserine modification. Disordered regions lie at residues 860–901 (QHEG…QART), 969–989 (SPHV…ALRK), and 1000–1019 (QEVN…KQGS). The span at 889 to 900 (RATNGPSDSQAR) shows a compositional bias: polar residues. S969 and S981 each carry phosphoserine. The span at 969 to 978 (SPHVGHRRTD) shows a compositional bias: basic and acidic residues. T1059 carries the post-translational modification Phosphothreonine. Phosphoserine occurs at positions 1063 and 1154. The segment at 1134 to 1178 (RGSEDGPRPQSNWKESANKMSPSGGAPQTTPTLRSRPKDLPVRRK) is disordered. Polar residues predominate over residues 1142-1166 (PQSNWKESANKMSPSGGAPQTTPTL). T1163 is subject to Phosphothreonine. Over residues 1169-1178 (RPKDLPVRRK) the composition is skewed to basic and acidic residues. Residues T1179 and T1185 each carry the phosphothreonine modification. 2 disordered regions span residues 1216-1265 (PGEA…PASS) and 1291-1493 (KSSP…VASV). S1224 carries the phosphoserine modification. T1226 bears the Phosphothreonine mark. Basic and acidic residues-rich tracts occupy residues 1244–1254 (EQRRRSLKEMP) and 1317–1331 (DPRK…DRKA). At S1366 the chain carries Phosphoserine. 2 stretches are compositionally biased toward basic and acidic residues: residues 1393 to 1410 (DHPR…RAYS) and 1426 to 1437 (HEARERRREQPK). The residue at position 1441 (S1441) is a Phosphoserine. Residues 1462–1483 (DSHKVLPRDLEKEDAPQEKERP) show a composition bias toward basic and acidic residues. Residues S1488 and S1506 each carry the phosphoserine modification. Disordered stretches follow at residues 1512 to 1627 (QLKQ…KRVD) and 1642 to 1806 (ALKT…ENQV). Residues 1522–1531 (TEPKDTDTLV) are compositionally biased toward basic and acidic residues. Residues 1537 to 1568 (QYGTWTEQCQSGESLATESPDSSATSTRKQPP) show a composition bias toward polar residues. Residues S1555 and S1662 each carry the phosphoserine modification. Residues 1649-1666 (LSKRSRRRAPISHSLRRS) show a composition bias toward basic residues. Composition is skewed to basic and acidic residues over residues 1667–1677 (RFSESESRSPL) and 1689–1714 (DSTE…ERTP). 4 positions are modified to phosphoserine: S1701, S1757, S1760, and S1786. Over residues 1753–1764 (PQPKSPKSPFQP) the composition is skewed to low complexity.

This is an uncharacterized protein from Homo sapiens (Human).